A 474-amino-acid polypeptide reads, in one-letter code: 2-succinylbenzoate--CoA ligase (474 aa).

This sequence belongs to the ATP-dependent AMP-binding enzyme family. MenE subfamily.

It catalyses the reaction 2-succinylbenzoate + ATP + CoA = 2-succinylbenzoyl-CoA + AMP + diphosphate. The protein operates within quinol/quinone metabolism; 1,4-dihydroxy-2-naphthoate biosynthesis; 1,4-dihydroxy-2-naphthoate from chorismate: step 5/7. It functions in the pathway quinol/quinone metabolism; menaquinone biosynthesis. Functionally, converts 2-succinylbenzoate (OSB) to 2-succinylbenzoyl-CoA (OSB-CoA). The sequence is that of 2-succinylbenzoate--CoA ligase from Staphylococcus epidermidis (strain ATCC 35984 / DSM 28319 / BCRC 17069 / CCUG 31568 / BM 3577 / RP62A).